Consider the following 580-residue polypeptide: 2-succinyl-5-enolpyruvyl-6-hydroxy-3-cyclohexene-1-carboxylate synthase (580 aa).

It belongs to the TPP enzyme family. MenD subfamily. In terms of assembly, homodimer. It depends on Mg(2+) as a cofactor. Mn(2+) is required as a cofactor. The cofactor is thiamine diphosphate.

It catalyses the reaction isochorismate + 2-oxoglutarate + H(+) = 5-enolpyruvoyl-6-hydroxy-2-succinyl-cyclohex-3-ene-1-carboxylate + CO2. The protein operates within quinol/quinone metabolism; 1,4-dihydroxy-2-naphthoate biosynthesis; 1,4-dihydroxy-2-naphthoate from chorismate: step 2/7. Its pathway is quinol/quinone metabolism; menaquinone biosynthesis. Its function is as follows. Catalyzes the thiamine diphosphate-dependent decarboxylation of 2-oxoglutarate and the subsequent addition of the resulting succinic semialdehyde-thiamine pyrophosphate anion to isochorismate to yield 2-succinyl-5-enolpyruvyl-6-hydroxy-3-cyclohexene-1-carboxylate (SEPHCHC). The chain is 2-succinyl-5-enolpyruvyl-6-hydroxy-3-cyclohexene-1-carboxylate synthase from Listeria innocua serovar 6a (strain ATCC BAA-680 / CLIP 11262).